A 508-amino-acid polypeptide reads, in one-letter code: MGLPWYRVHTVVLNDPGRLLSVHIMHTALVSGWAGSMALYELAVFDPSDPVLDPMWRQGMFVIPFMTRLGITNSWGGWNITGGTITNPGLWSYEGVAAAHIVFSGLCFLAAIWHWVYWDLEIFCDERTGKPSLDLPKIFGIHLFLSGVACFGFGAFHVTGLYGPGIWVSDPYGLTGKVQPVNPAWGVEGFDPFVPGGIASHHIAAGTLGILAGLFHLSVRPPQRLYKGLRMGNIETVLSSSIAAVFFAAFVVAGTMWYGSATTPIELFGPTRYQWDQGYFQQEIYRRVSAGLAENQSVSEAWSKIPEKLAFYDYIGNNPAKGGLFRAGSMDNGDGIAVGWLGHPVFRNKEGRELFVRRMPTFFETFPVVLVDGDGIVRADVPFRRAESKYSVEQVGVTVEFYGGELNGVSYSDPATVKKYARRAQLGEIFELDRATLKSDGVFRSSPRGWFTFGHASFALLFFFGHIWHGSRTLFRDVFAGIDPDLDAQVEFGAFQKLGDPTTKRQAV.

The next 6 helical transmembrane spans lie at 21 to 36 (SVHIMHTALVSGWAGS), 101 to 115 (IVFSGLCFLAAIWHW), 140 to 156 (GIHLFLSGVACFGFGAF), 203 to 218 (IAAGTLGILAGLFHLS), 237 to 252 (VLSSSIAAVFFAAFVV), and 457 to 472 (SFALLFFFGHIWHGSR).

It belongs to the PsbB/PsbC family. PsbB subfamily. PSII is composed of 1 copy each of membrane proteins PsbA, PsbB, PsbC, PsbD, PsbE, PsbF, PsbH, PsbI, PsbJ, PsbK, PsbL, PsbM, PsbT, PsbX, PsbY, PsbZ, Psb30/Ycf12, at least 3 peripheral proteins of the oxygen-evolving complex and a large number of cofactors. It forms dimeric complexes. It depends on Binds multiple chlorophylls. PSII binds additional chlorophylls, carotenoids and specific lipids. as a cofactor.

Its subcellular location is the plastid. It is found in the chloroplast thylakoid membrane. One of the components of the core complex of photosystem II (PSII). It binds chlorophyll and helps catalyze the primary light-induced photochemical processes of PSII. PSII is a light-driven water:plastoquinone oxidoreductase, using light energy to abstract electrons from H(2)O, generating O(2) and a proton gradient subsequently used for ATP formation. This chain is Photosystem II CP47 reaction center protein, found in Lobularia maritima (Sweet alyssum).